We begin with the raw amino-acid sequence, 241 residues long: FKBP-type peptidyl-prolyl cis-trans isomerase FkpA (241 aa).

Residues 153–241 (ETKITVHYKG…IELLDVVNGV (89 aa)) enclose the PPIase FKBP-type domain.

The protein belongs to the FKBP-type PPIase family.

It catalyses the reaction [protein]-peptidylproline (omega=180) = [protein]-peptidylproline (omega=0). Functionally, PPIases accelerate the folding of proteins. It catalyzes the cis-trans isomerization of proline imidic peptide bonds in oligopeptides. The chain is FKBP-type peptidyl-prolyl cis-trans isomerase FkpA (fkpA) from Buchnera aphidicola subsp. Acyrthosiphon pisum (strain APS) (Acyrthosiphon pisum symbiotic bacterium).